A 227-amino-acid chain; its full sequence is Enolase-phosphatase E1 (227 aa).

Mg(2+) contacts are provided by D12 and E14. Substrate-binding positions include 118 to 119 and K159; that span reads SS. Residue D186 participates in Mg(2+) binding.

It belongs to the HAD-like hydrolase superfamily. MasA/MtnC family. Monomer. Mg(2+) is required as a cofactor.

It localises to the cytoplasm. The protein localises to the nucleus. It carries out the reaction 5-methylsulfanyl-2,3-dioxopentyl phosphate + H2O = 1,2-dihydroxy-5-(methylsulfanyl)pent-1-en-3-one + phosphate. It participates in amino-acid biosynthesis; L-methionine biosynthesis via salvage pathway; L-methionine from S-methyl-5-thio-alpha-D-ribose 1-phosphate: step 3/6. The protein operates within amino-acid biosynthesis; L-methionine biosynthesis via salvage pathway; L-methionine from S-methyl-5-thio-alpha-D-ribose 1-phosphate: step 4/6. Bifunctional enzyme that catalyzes the enolization of 2,3-diketo-5-methylthiopentyl-1-phosphate (DK-MTP-1-P) into the intermediate 2-hydroxy-3-keto-5-methylthiopentenyl-1-phosphate (HK-MTPenyl-1-P), which is then dephosphorylated to form the acireductone 1,2-dihydroxy-3-keto-5-methylthiopentene (DHK-MTPene). The sequence is that of Enolase-phosphatase E1 from Vanderwaltozyma polyspora (strain ATCC 22028 / DSM 70294 / BCRC 21397 / CBS 2163 / NBRC 10782 / NRRL Y-8283 / UCD 57-17) (Kluyveromyces polysporus).